We begin with the raw amino-acid sequence, 293 residues long: Fructokinase (293 aa).

Thr-133 contacts ATP. The Zn(2+) site is built by His-156, Cys-174, His-177, and Cys-180. Residues Pro-188 and 236–240 (GVMAQ) each bind ATP.

It belongs to the ROK (NagC/XylR) family. Mg(2+) serves as cofactor.

The enzyme catalyses D-fructose + ATP = D-fructose 6-phosphate + ADP + H(+). Its activity is regulated as follows. Inhibition by zinc ions. The polypeptide is Fructokinase (scrK) (Streptococcus mutans serotype c (strain ATCC 700610 / UA159)).